The chain runs to 329 residues: 3'-5' exonuclease (329 aa).

The segment at 26–88 (EEKPKPKKVV…MADVGTPSPE (63 aa)) is disordered. Basic and acidic residues predominate over residues 46–65 (KNLDTPEIVNKENAEVENPP). 2 positions are modified to phosphoserine: Ser78 and Ser86. Residues 130–288 (TEIVPMAFDM…IGQVIYREIE (159 aa)) form the 3'-5' exonuclease domain. The Mg(2+) site is built by Asp138, Glu140, and Asp276.

Belongs to the WRNexo family.

The protein resides in the nucleus. In terms of biological role, has exonuclease activity on both single-stranded and duplex templates bearing overhangs, but not blunt ended duplex DNA, and cleaves in a 3'-5' direction. Essential for the formation of DNA replication focal centers. Has an important role in maintaining genome stability. This is 3'-5' exonuclease from Drosophila mojavensis (Fruit fly).